Here is a 431-residue protein sequence, read N- to C-terminus: Glucose-6-phosphate isomerase (431 aa).

Catalysis depends on glutamate 284, which acts as the Proton donor. Catalysis depends on residues histidine 305 and lysine 420.

The protein belongs to the GPI family.

The protein resides in the cytoplasm. The catalysed reaction is alpha-D-glucose 6-phosphate = beta-D-fructose 6-phosphate. Its pathway is carbohydrate biosynthesis; gluconeogenesis. It participates in carbohydrate degradation; glycolysis; D-glyceraldehyde 3-phosphate and glycerone phosphate from D-glucose: step 2/4. Catalyzes the reversible isomerization of glucose-6-phosphate to fructose-6-phosphate. The chain is Glucose-6-phosphate isomerase from Mycoplasma genitalium (strain ATCC 33530 / DSM 19775 / NCTC 10195 / G37) (Mycoplasmoides genitalium).